The sequence spans 112 residues: Large ribosomal subunit protein eL33w (112 aa).

Belongs to the eukaryotic ribosomal protein eL33 family.

The protein is Large ribosomal subunit protein eL33w (RPL35AA) of Arabidopsis thaliana (Mouse-ear cress).